A 200-amino-acid chain; its full sequence is Holliday junction branch migration complex subunit RuvA (200 aa).

The segment at 1–63 (MIASVRGVVT…EDSLTLYGFA (63 aa)) is domain I. The interval 64-142 (DDNAKALFEL…PVPVGGDGAA (79 aa)) is domain II. The flexible linker stretch occupies residues 143-151 (GVTTGAWPE). The domain III stretch occupies residues 151 to 200 (EQVRQALVGLGWTAGQAEQAVAAVAETVDGEVPPVPVLLRQAIRLLGRTR).

This sequence belongs to the RuvA family. In terms of assembly, homotetramer. Forms an RuvA(8)-RuvB(12)-Holliday junction (HJ) complex. HJ DNA is sandwiched between 2 RuvA tetramers; dsDNA enters through RuvA and exits via RuvB. An RuvB hexamer assembles on each DNA strand where it exits the tetramer. Each RuvB hexamer is contacted by two RuvA subunits (via domain III) on 2 adjacent RuvB subunits; this complex drives branch migration. In the full resolvosome a probable DNA-RuvA(4)-RuvB(12)-RuvC(2) complex forms which resolves the HJ.

It localises to the cytoplasm. The RuvA-RuvB-RuvC complex processes Holliday junction (HJ) DNA during genetic recombination and DNA repair, while the RuvA-RuvB complex plays an important role in the rescue of blocked DNA replication forks via replication fork reversal (RFR). RuvA specifically binds to HJ cruciform DNA, conferring on it an open structure. The RuvB hexamer acts as an ATP-dependent pump, pulling dsDNA into and through the RuvAB complex. HJ branch migration allows RuvC to scan DNA until it finds its consensus sequence, where it cleaves and resolves the cruciform DNA. The chain is Holliday junction branch migration complex subunit RuvA from Salinispora arenicola (strain CNS-205).